Reading from the N-terminus, the 107-residue chain is Urease subunit beta (107 aa).

This sequence belongs to the urease beta subunit family. In terms of assembly, heterotrimer of UreA (gamma), UreB (beta) and UreC (alpha) subunits. Three heterotrimers associate to form the active enzyme.

The protein resides in the cytoplasm. The catalysed reaction is urea + 2 H2O + H(+) = hydrogencarbonate + 2 NH4(+). It participates in nitrogen metabolism; urea degradation; CO(2) and NH(3) from urea (urease route): step 1/1. The polypeptide is Urease subunit beta (Bacillus sp. (strain TB-90)).